The following is a 527-amino-acid chain: CTP synthase (527 aa).

The interval 1–270 is amidoligase domain; sequence MKYIFVTGGV…ADVLCQLLQL (270 aa). Serine 12 contributes to the CTP binding site. UTP is bound at residue serine 12. ATP-binding positions include 13-18 and aspartate 70; that span reads GLGKGI. The Mg(2+) site is built by aspartate 70 and glutamate 145. CTP contacts are provided by residues 152 to 154, 191 to 196, and lysine 227; these read DIE and KTKPTQ. UTP-binding positions include 191–196 and lysine 227; that span reads KTKPTQ. In terms of domain architecture, Glutamine amidotransferase type-1 spans 292–525; the sequence is TIGIVSKYGK…VEACLKNRGK (234 aa). Glycine 349 is a binding site for L-glutamine. Residue cysteine 376 is the Nucleophile; for glutamine hydrolysis of the active site. L-glutamine is bound by residues 377–380, glutamate 400, and arginine 455; that span reads LGFQ. Residues histidine 498 and glutamate 500 contribute to the active site.

This sequence belongs to the CTP synthase family. Homotetramer.

The catalysed reaction is UTP + L-glutamine + ATP + H2O = CTP + L-glutamate + ADP + phosphate + 2 H(+). The enzyme catalyses L-glutamine + H2O = L-glutamate + NH4(+). It carries out the reaction UTP + NH4(+) + ATP = CTP + ADP + phosphate + 2 H(+). Its pathway is pyrimidine metabolism; CTP biosynthesis via de novo pathway; CTP from UDP: step 2/2. Allosterically activated by GTP, when glutamine is the substrate; GTP has no effect on the reaction when ammonia is the substrate. The allosteric effector GTP functions by stabilizing the protein conformation that binds the tetrahedral intermediate(s) formed during glutamine hydrolysis. Inhibited by the product CTP, via allosteric rather than competitive inhibition. Its function is as follows. Catalyzes the ATP-dependent amination of UTP to CTP with either L-glutamine or ammonia as the source of nitrogen. Regulates intracellular CTP levels through interactions with the four ribonucleotide triphosphates. The sequence is that of CTP synthase from Methanospirillum hungatei JF-1 (strain ATCC 27890 / DSM 864 / NBRC 100397 / JF-1).